We begin with the raw amino-acid sequence, 89 residues long: Small ribosomal subunit protein uS15 (89 aa).

The interval 1 to 25 (MSLDTTEKQQLINTHQTHGTDTGSA) is disordered. Over residues 8–25 (KQQLINTHQTHGTDTGSA) the composition is skewed to polar residues.

It belongs to the universal ribosomal protein uS15 family. As to quaternary structure, part of the 30S ribosomal subunit. Forms a bridge to the 50S subunit in the 70S ribosome, contacting the 23S rRNA.

In terms of biological role, one of the primary rRNA binding proteins, it binds directly to 16S rRNA where it helps nucleate assembly of the platform of the 30S subunit by binding and bridging several RNA helices of the 16S rRNA. Forms an intersubunit bridge (bridge B4) with the 23S rRNA of the 50S subunit in the ribosome. In Synechococcus sp. (strain CC9902), this protein is Small ribosomal subunit protein uS15.